A 331-amino-acid chain; its full sequence is FPVLGLDSRGVGGLMNSFPPPQGHAQNPLQVGAELQSRFFASQGCAQSPFQAAPAPPPTPQAPAAEPLQVDLLPVLAAAQESAAAAAAAAAAAAAVVTAPPAPAAASTVDTAALKQPPAPPPPPPAVSAPAAEAAPPAAAATIAAAAATAVVAPTSTVAVAPVASVLEKKTKSKGPYICALCAKEFKNGYNLRRHEAIHTGAKAGRVPSGAMKMPTMVPLSLLSVPQLSGASGGGGEAGAGGGTTAVAAGGVVTTTASGKRIRKNHACEMCGKAFRDVYHLNRHKLSHSDEKPYQCPVCQQRFKRKDRMSYHVRSHDGAVHKPYNCSHCGK.

2 disordered regions span residues 46-65 and 108-131; these read AQSP…APAA and TVDT…SAPA. A compositionally biased stretch (pro residues) spans 117–127; the sequence is PPAPPPPPPAV. 4 C2H2-type zinc fingers span residues 177–199, 266–288, 294–316, and 324–331; these read YICA…EAIH, HACE…KLSH, YQCP…VRSH, and YNCSHCGK.

As to quaternary structure, interacts with BPTF. Ubiquitously expressed.

It localises to the nucleus. In terms of biological role, transcriptional regulator. Acts as a transcriptional activator that binds to purine-rich GAGA sites found in the promoter of many genes including insulin I and II and islet amyloid polypeptide. In Mesocricetus auratus (Golden hamster), this protein is Myc-associated zinc finger protein (MAZ).